The sequence spans 277 residues: MNRIGCHLSTSKGLHKTIEQCLEINADTFQFFPRNPRGSKSRLIPKKEIDKFLELRKIHNINKIVCHGAYTMNLCSDREDLRKLAVKLINEDMKKIQDMRINHYVLHPGSHKNQGIEEGLKLIVEGINKVDVSNGQMICIETMSGKGSELGCDIDQIAYIINNASIPLYVCIDTCHLFSSGIRLDNFDDYLDEFDKKIGIDKIKVIHCNDSMMPFGANKDRHEKFGKGLIGEQDLFNVIFNERLKDRPIILETPNDLDGYKIEIEEIRRNFNELRQN.

Zn(2+) contacts are provided by His-67, His-107, Glu-141, Asp-173, His-176, His-207, Asp-220, His-222, and Glu-252.

The protein belongs to the AP endonuclease 2 family. It depends on Zn(2+) as a cofactor.

It catalyses the reaction Endonucleolytic cleavage to 5'-phosphooligonucleotide end-products.. Its function is as follows. Endonuclease IV plays a role in DNA repair. It cleaves phosphodiester bonds at apurinic or apyrimidinic (AP) sites, generating a 3'-hydroxyl group and a 5'-terminal sugar phosphate. The polypeptide is Probable endonuclease 4 (Finegoldia magna (strain ATCC 29328 / DSM 20472 / WAL 2508) (Peptostreptococcus magnus)).